The chain runs to 337 residues: Geranylgeranyl pyrophosphate synthase subD (337 aa).

3 residues coordinate isopentenyl diphosphate: K53, R56, and H85. D92 and D96 together coordinate Mg(2+). Residue R101 coordinates dimethylallyl diphosphate. Residue R102 participates in isopentenyl diphosphate binding. Positions 179, 180, and 219 each coordinate dimethylallyl diphosphate. A Mg(2+)-binding site is contributed by D222. Residues N226, K236, and K246 each coordinate dimethylallyl diphosphate.

Belongs to the FPP/GGPP synthase family. It depends on Mg(2+) as a cofactor.

It catalyses the reaction isopentenyl diphosphate + dimethylallyl diphosphate = (2E)-geranyl diphosphate + diphosphate. The enzyme catalyses isopentenyl diphosphate + (2E)-geranyl diphosphate = (2E,6E)-farnesyl diphosphate + diphosphate. It carries out the reaction isopentenyl diphosphate + (2E,6E)-farnesyl diphosphate = (2E,6E,10E)-geranylgeranyl diphosphate + diphosphate. It functions in the pathway secondary metabolite biosynthesis; terpenoid biosynthesis. In terms of biological role, geranylgeranyl pyrophosphate synthase; part of the gene cluster that mediates the biosynthesis of the immunosuppressants subglutinols, meroterpenoids consisting of an alpha-pyrone (4-hydroxy-5,6-dimethyl-2-pyrone) moiety attached to a decalin core fused to a five-membered cyclic ether carrying a prenylside chain. The first step of the pathway is the synthesis of the alpha-pyrone moiety by the polyketide synthase subA via condensation of one acetyl-CoA starter unit with 3 malonyl-CoA units and 2 methylations. The alpha-pyrone is then combined with geranylgeranyl pyrophosphate (GGPP) formed by the GGPP synthase subD through the action of the prenyltransferase subC to yield a linear alpha-pyrone diterpenoid. Subsequent steps in the subglutinol biosynthetic pathway involve the decalin core formation, which is thought to be initiated by the epoxidation of the C10-C11 olefin by the FAD-dependent oxidoreductase subE. The following cyclization cascade would be catalyzed by the terpene cyclase subB. Lastly, the FAD-dependent dehydrogenase subF probably catalyzes the five-membered cyclic ether formation to complete the formation of subglutinol A. Subsequent redox reactions appear to give rise to subglutinol C and D, however, it remains unclear which enzymes are responsible for these transformations. SubD may have secondary function in the conversion of the identified subglutinols to subglutinol analog 45, which seems to be the major product of the cluster. In Metarhizium robertsii (strain ARSEF 23 / ATCC MYA-3075) (Metarhizium anisopliae (strain ARSEF 23)), this protein is Geranylgeranyl pyrophosphate synthase subD.